Consider the following 360-residue polypeptide: Phospho-N-acetylmuramoyl-pentapeptide-transferase (360 aa).

A run of 10 helical transmembrane segments spans residues 25–45 (RGIL…PWMI), 73–93 (TMGG…WADL), 97–117 (YVWT…VDDY), 132–152 (WKYF…YMTA), 167–187 (TIEI…IVGS), 199–219 (GLAI…CYLS), 236–256 (AGEL…FLWF), 263–283 (VFMG…IAVI), 288–308 (VVLF…MIQV), and 338–358 (VIVR…ATLK).

The protein belongs to the glycosyltransferase 4 family. MraY subfamily. The cofactor is Mg(2+).

Its subcellular location is the cell inner membrane. The catalysed reaction is UDP-N-acetyl-alpha-D-muramoyl-L-alanyl-gamma-D-glutamyl-meso-2,6-diaminopimeloyl-D-alanyl-D-alanine + di-trans,octa-cis-undecaprenyl phosphate = di-trans,octa-cis-undecaprenyl diphospho-N-acetyl-alpha-D-muramoyl-L-alanyl-D-glutamyl-meso-2,6-diaminopimeloyl-D-alanyl-D-alanine + UMP. The protein operates within cell wall biogenesis; peptidoglycan biosynthesis. Functionally, catalyzes the initial step of the lipid cycle reactions in the biosynthesis of the cell wall peptidoglycan: transfers peptidoglycan precursor phospho-MurNAc-pentapeptide from UDP-MurNAc-pentapeptide onto the lipid carrier undecaprenyl phosphate, yielding undecaprenyl-pyrophosphoryl-MurNAc-pentapeptide, known as lipid I. This chain is Phospho-N-acetylmuramoyl-pentapeptide-transferase, found in Azotobacter vinelandii (strain DJ / ATCC BAA-1303).